Here is a 215-residue protein sequence, read N- to C-terminus: Pyrrolidone-carboxylate peptidase (215 aa).

Residues Glu80, Cys143, and His167 contribute to the active site.

Belongs to the peptidase C15 family. In terms of assembly, homotetramer.

The protein resides in the cytoplasm. It carries out the reaction Release of an N-terminal pyroglutamyl group from a polypeptide, the second amino acid generally not being Pro.. Functionally, removes 5-oxoproline from various penultimate amino acid residues except L-proline. In Bacillus cereus (strain G9842), this protein is Pyrrolidone-carboxylate peptidase.